The chain runs to 475 residues: Ankyrin repeat, SAM and basic leucine zipper domain-containing protein 1 (475 aa).

The disordered stretch occupies residues 1 to 25; the sequence is MAAGPLRGLAVAGGGESSDSEDDGW. 3 positions are modified to phosphoserine: Ser17, Ser18, and Ser20. ANK repeat units lie at residues 45 to 74, 78 to 107, 110 to 144, 148 to 177, 181 to 210, and 214 to 243; these read ERQETFKKALTTGNISLVEELLDSGISVDT, YGWTSLMYAASVSNVELVRVLLDRGANASF, DKQTVLITACSARGSEEKILKCIELLLSRNADPNV, RLMTPIMYAARDGHPQVVALLVAHGAEVNT, NGYTALTWAARQGHKNVVLKLLELGANKMI, and DGKTPSEIAKRNKHLEIFNFLSLTLNPLEG. Residues 272–334 form the SAM domain; sequence SYTAFGDLEI…KIMAALKELE (63 aa).

As to quaternary structure, interacts with DDX4, PIWIL1, RANBP9 and TDRD1.

It localises to the cytoplasm. Plays a central role during spermatogenesis by repressing transposable elements and preventing their mobilization, which is essential for the germline integrity. Acts via the piRNA metabolic process, which mediates the repression of transposable elements during meiosis by forming complexes composed of piRNAs and Piwi proteins and governs the methylation and subsequent repression of transposons. Its association with pi-bodies suggests a participation in the primary piRNAs metabolic process. Required prior to the pachytene stage to facilitate the production of multiple types of piRNAs, including those associated with repeats involved in the regulation of retrotransposons. May act by mediating protein-protein interactions during germ cell maturation. This chain is Ankyrin repeat, SAM and basic leucine zipper domain-containing protein 1 (ASZ1), found in Bos taurus (Bovine).